Here is a 393-residue protein sequence, read N- to C-terminus: DNA-directed RNA polymerase subunit Rpo1C (393 aa).

This sequence belongs to the RNA polymerase beta' chain family. As to quaternary structure, part of the 13-subunit RNA polymerase complex. Interacts with TFS4.

The protein localises to the cytoplasm. It carries out the reaction RNA(n) + a ribonucleoside 5'-triphosphate = RNA(n+1) + diphosphate. Its function is as follows. DNA-dependent RNA polymerase (RNAP) catalyzes the transcription of DNA into RNA using the four ribonucleoside triphosphates as substrates. Forms part of the jaw domain. Functionally, reconstitution experiments show this subunit is required for basic activity. The sequence is that of DNA-directed RNA polymerase subunit Rpo1C from Sulfolobus acidocaldarius (strain ATCC 33909 / DSM 639 / JCM 8929 / NBRC 15157 / NCIMB 11770).